A 175-amino-acid polypeptide reads, in one-letter code: ATP synthase subunit delta (175 aa).

Belongs to the ATPase delta chain family. F-type ATPases have 2 components, F(1) - the catalytic core - and F(0) - the membrane proton channel. F(1) has five subunits: alpha(3), beta(3), gamma(1), delta(1), epsilon(1). F(0) has three main subunits: a(1), b(2) and c(10-14). The alpha and beta chains form an alternating ring which encloses part of the gamma chain. F(1) is attached to F(0) by a central stalk formed by the gamma and epsilon chains, while a peripheral stalk is formed by the delta and b chains.

It is found in the cell membrane. Its function is as follows. F(1)F(0) ATP synthase produces ATP from ADP in the presence of a proton or sodium gradient. F-type ATPases consist of two structural domains, F(1) containing the extramembraneous catalytic core and F(0) containing the membrane proton channel, linked together by a central stalk and a peripheral stalk. During catalysis, ATP synthesis in the catalytic domain of F(1) is coupled via a rotary mechanism of the central stalk subunits to proton translocation. In terms of biological role, this protein is part of the stalk that links CF(0) to CF(1). It either transmits conformational changes from CF(0) to CF(1) or is implicated in proton conduction. The polypeptide is ATP synthase subunit delta (Lactococcus lactis subsp. lactis (strain IL1403) (Streptococcus lactis)).